A 118-amino-acid chain; its full sequence is Sporulation protein YjcA (118 aa).

The next 3 membrane-spanning stretches (helical) occupy residues I8–M28, F62–I82, and A92–V112.

Belongs to the UPF0713 family.

It is found in the cell membrane. Involved in sporulation. This chain is Sporulation protein YjcA (yjcA), found in Bacillus subtilis (strain 168).